Consider the following 444-residue polypeptide: Phosphoglucosamine mutase (444 aa).

The Phosphoserine intermediate role is filled by Ser100. Residues Ser100, Asp240, Asp242, and Asp244 each contribute to the Mg(2+) site. The residue at position 100 (Ser100) is a Phosphoserine.

This sequence belongs to the phosphohexose mutase family. It depends on Mg(2+) as a cofactor. Post-translationally, activated by phosphorylation.

The enzyme catalyses alpha-D-glucosamine 1-phosphate = D-glucosamine 6-phosphate. Catalyzes the conversion of glucosamine-6-phosphate to glucosamine-1-phosphate. This is Phosphoglucosamine mutase from Moorella thermoacetica (strain ATCC 39073 / JCM 9320).